Consider the following 920-residue polypeptide: KIN14B-interacting protein At4g14310 (920 aa).

A compositionally biased stretch (basic residues) spans 1-10; the sequence is MSASTNRRRL. Disordered regions lie at residues 1-199 and 309-375; these read MSAS…EKST and IDGP…EKPS. Positions 35–54 are enriched in polar residues; sequence PISSKNSNPALQKSLSSKEN. The span at 90–105 shows a compositional bias: low complexity; that stretch reads TRSTSSGLRGRSSSPS. Residues 112–135 show a composition bias toward basic and acidic residues; sequence SDLRKRNESRVIGEKGESGQDKKS. Composition is skewed to polar residues over residues 137–147 and 166–184; these read LKSSGFKQGTS and CPVNSSKFEGSSVARNSIS. Positions 327-337 are enriched in basic and acidic residues; it reads LNKEELEDRLL. Over residues 345–355 the composition is skewed to polar residues; the sequence is SRTQSKTSSHV. Over residues 357–374 the composition is skewed to basic and acidic residues; sequence KGHDSVESNKAVNAEEKP. Positions 435–463 form a coiled coil; the sequence is TEILRANEALEEIDDEENREEMELEEIDD.

As to quaternary structure, interacts with KIN14B, CDKA-1, CKS1 and CKS2.

The protein localises to the cytoplasm. Its function is as follows. Might be involved in division plane determination. The protein is KIN14B-interacting protein At4g14310 of Arabidopsis thaliana (Mouse-ear cress).